The following is a 330-amino-acid chain: Major ferric iron-binding protein (330 aa).

Positions 1–22 (MKTSIRYALLAAALTAATPALA) are cleaved as a signal peptide. Residues H31, E79, Y217, and Y218 each contribute to the Fe cation site.

The protein belongs to the bacterial solute-binding protein 1 family.

The protein resides in the periplasm. Its function is as follows. This protein may be a central component in the iron-acquisition system. This Neisseria gonorrhoeae protein is Major ferric iron-binding protein (fbp).